Here is a 271-residue protein sequence, read N- to C-terminus: Undecaprenyl-diphosphatase (271 aa).

8 helical membrane-spanning segments follow: residues 2–22 (LLIL…FVPV), 42–62 (ANLF…VVYW), 80–100 (LRFW…GFSL), 108–128 (LFNP…MIIV), 149–168 (SIFV…SRSA), 175–195 (WIAG…AIPV), 214–234 (IEFI…LVVI), and 248–268 (IFAI…IFKI).

This sequence belongs to the UppP family.

The protein localises to the cell membrane. It carries out the reaction di-trans,octa-cis-undecaprenyl diphosphate + H2O = di-trans,octa-cis-undecaprenyl phosphate + phosphate + H(+). Its function is as follows. Catalyzes the dephosphorylation of undecaprenyl diphosphate (UPP). Confers resistance to bacitracin. This chain is Undecaprenyl-diphosphatase, found in Clostridium tetani (strain Massachusetts / E88).